A 474-amino-acid chain; its full sequence is L-arabinose isomerase (474 aa).

Glu306, Glu331, His348, and His447 together coordinate Mn(2+).

It belongs to the arabinose isomerase family. Mn(2+) is required as a cofactor.

The enzyme catalyses beta-L-arabinopyranose = L-ribulose. It functions in the pathway carbohydrate degradation; L-arabinose degradation via L-ribulose; D-xylulose 5-phosphate from L-arabinose (bacterial route): step 1/3. Its function is as follows. Catalyzes the conversion of L-arabinose to L-ribulose. The sequence is that of L-arabinose isomerase from Leuconostoc mesenteroides subsp. mesenteroides (strain ATCC 8293 / DSM 20343 / BCRC 11652 / CCM 1803 / JCM 6124 / NCDO 523 / NBRC 100496 / NCIMB 8023 / NCTC 12954 / NRRL B-1118 / 37Y).